Consider the following 93-residue polypeptide: MKKTLMLLAMVVALVILPFFINHGGEYGGSDGEAESQIQALAPQYKPWFQPLYEPASGEIESLLFTLQGSLGAAVIFYILGYCKGKQRRDDRA.

Transmembrane regions (helical) follow at residues 5–25 (LMLL…NHGG) and 63–83 (LLFT…LGYC).

The protein belongs to the CbiN family. In terms of assembly, forms an energy-coupling factor (ECF) transporter complex composed of an ATP-binding protein (A component, CbiO), a transmembrane protein (T component, CbiQ) and 2 possible substrate-capture proteins (S components, CbiM and CbiN) of unknown stoichimetry.

Its subcellular location is the cell inner membrane. The protein operates within cofactor biosynthesis; adenosylcobalamin biosynthesis. Its function is as follows. Part of the energy-coupling factor (ECF) transporter complex CbiMNOQ involved in cobalt import. The sequence is that of Cobalt transport protein CbiN from Salmonella choleraesuis (strain SC-B67).